The primary structure comprises 89 residues: UPF0213 protein LSEI_1587 (89 aa).

Residues 4–79 enclose the GIY-YIG domain; the sequence is KTYYFYVLLC…KHQTRHRKEV (76 aa).

This sequence belongs to the UPF0213 family.

The sequence is that of UPF0213 protein LSEI_1587 from Lacticaseibacillus paracasei (strain ATCC 334 / BCRC 17002 / CCUG 31169 / CIP 107868 / KCTC 3260 / NRRL B-441) (Lactobacillus paracasei).